The primary structure comprises 544 residues: Chaperonin GroEL 1 (544 aa).

Residues 30-33 (TLGP), 87-91 (DGTTT), G415, 480-482 (NAA), and D496 contribute to the ATP site.

This sequence belongs to the chaperonin (HSP60) family. Forms a cylinder of 14 subunits composed of two heptameric rings stacked back-to-back. Interacts with the co-chaperonin GroES.

The protein resides in the cytoplasm. The enzyme catalyses ATP + H2O + a folded polypeptide = ADP + phosphate + an unfolded polypeptide.. Functionally, together with its co-chaperonin GroES, plays an essential role in assisting protein folding. The GroEL-GroES system forms a nano-cage that allows encapsulation of the non-native substrate proteins and provides a physical environment optimized to promote and accelerate protein folding. The sequence is that of Chaperonin GroEL 1 from Polaromonas naphthalenivorans (strain CJ2).